We begin with the raw amino-acid sequence, 324 residues long: D-alanine--D-alanine ligase (324 aa).

The region spanning 121 to 321 (NQYLKAFGVR…IKDVMTDIIE (201 aa)) is the ATP-grasp domain. ATP is bound at residue 149–204 (MEKIGLPCFIKPSLGGSSFGVTKVKTKEQIQPAIVKAFEEAQEVLVEAFMEGTELT). Asp275, Glu288, and Asn290 together coordinate Mg(2+).

It belongs to the D-alanine--D-alanine ligase family. The cofactor is Mg(2+). It depends on Mn(2+) as a cofactor.

The protein resides in the cytoplasm. It catalyses the reaction 2 D-alanine + ATP = D-alanyl-D-alanine + ADP + phosphate + H(+). It functions in the pathway cell wall biogenesis; peptidoglycan biosynthesis. Cell wall formation. The polypeptide is D-alanine--D-alanine ligase (Bacteroides thetaiotaomicron (strain ATCC 29148 / DSM 2079 / JCM 5827 / CCUG 10774 / NCTC 10582 / VPI-5482 / E50)).